A 267-amino-acid chain; its full sequence is Hydroxyethylthiazole kinase 2 (267 aa).

Methionine 41 is a binding site for substrate. Lysine 116 and threonine 166 together coordinate ATP. Glycine 193 is a substrate binding site.

The protein belongs to the Thz kinase family. Mg(2+) serves as cofactor.

The catalysed reaction is 5-(2-hydroxyethyl)-4-methylthiazole + ATP = 4-methyl-5-(2-phosphooxyethyl)-thiazole + ADP + H(+). The protein operates within cofactor biosynthesis; thiamine diphosphate biosynthesis; 4-methyl-5-(2-phosphoethyl)-thiazole from 5-(2-hydroxyethyl)-4-methylthiazole: step 1/1. Catalyzes the phosphorylation of the hydroxyl group of 4-methyl-5-beta-hydroxyethylthiazole (THZ). The polypeptide is Hydroxyethylthiazole kinase 2 (Streptococcus pneumoniae (strain 70585)).